The sequence spans 821 residues: Serine/threonine-protein kinase RAD53 (821 aa).

Residue Ser-24 is modified to Phosphoserine. Residues 66 to 116 (WTFGRNPACDYHLGNISRLSNKHFQILLGEDGNLLLNDISTNGTWLNGQKV) form the FHA 1 domain. Ser-175 is subject to Phosphoserine. Positions 198 to 466 (SIIDEVVGQG…AAKALNHPWI (269 aa)) constitute a Protein kinase domain. Residues 204–212 (VGQGAFATV) and Lys-227 each bind ATP. Residue Asp-319 is the Proton acceptor of the active site. Ser-547 and Ser-560 each carry phosphoserine. Residues 601–664 (FFIGRSEDCN…NVSYLNNNRM (64 aa)) form the FHA 2 domain. The tract at residues 735–770 (AAQRANQPSASSSSMSAKKPPVSDTNNNGNNSVLND) is disordered. The span at 742–770 (PSASSSSMSAKKPPVSDTNNNGNNSVLND) shows a compositional bias: low complexity. A phosphoserine mark is found at Ser-774 and Ser-793. Residues 791–821 (SLSQSQIDPSKKVKRAKLDQTSKGPENLQFS) form a disordered region. A compositionally biased stretch (polar residues) spans 809–821 (DQTSKGPENLQFS).

This sequence belongs to the protein kinase superfamily. CAMK Ser/Thr protein kinase family. CHEK2 subfamily. Interacts (via domain FHA 1) with PTC2 (when phosphorylated); the interaction is direct and serves to regulate DNA damage checkpoint signaling. Interacts with PIN4. Autophosphorylated. Phosphorylated in response to DNA double-strand breaks; dephosphorylation is mediated by PTC2 and PTC3.

It is found in the nucleus. The enzyme catalyses L-seryl-[protein] + ATP = O-phospho-L-seryl-[protein] + ADP + H(+). The catalysed reaction is L-threonyl-[protein] + ATP = O-phospho-L-threonyl-[protein] + ADP + H(+). It catalyses the reaction L-tyrosyl-[protein] + ATP = O-phospho-L-tyrosyl-[protein] + ADP + H(+). Its activity is regulated as follows. Inactivated by dephosphorylation via recruitment of PTC2. Functionally, controls S-phase checkpoint as well as G1 and G2 DNA damage checkpoints. Phosphorylates proteins on serine, threonine, and tyrosine. Prevents entry into anaphase and mitotic exit after DNA damage via regulation of the Polo kinase CDC5. Seems to be involved in the phosphorylation of RPH1. This chain is Serine/threonine-protein kinase RAD53 (RAD53), found in Saccharomyces cerevisiae (strain ATCC 204508 / S288c) (Baker's yeast).